Reading from the N-terminus, the 235-residue chain is MEFLYSDEENYLKDRFFDFFNMNVDKDKYTSIGICGGRSIVNFLSVFLKQNFSFRRSHFFLVDERCVPLNDENSNYNLLNKNFFSKMVDKNLISISKFHAFVYSEIDEATAIHDYNIEFNSRFNIFDFIIVSVGEDGHIASLFPSRKLLFSDVEGYQYEYNSPKFPSKRISLTPKSLFGSKAVVLLFMGVDKKCALENFLASNSSINECPARLLKEHPNLLVLTNIKRDESYAGS.

The protein belongs to the glucosamine/galactosamine-6-phosphate isomerase family. 6-phosphogluconolactonase subfamily.

The enzyme catalyses 6-phospho-D-glucono-1,5-lactone + H2O = 6-phospho-D-gluconate + H(+). It functions in the pathway carbohydrate degradation; pentose phosphate pathway; D-ribulose 5-phosphate from D-glucose 6-phosphate (oxidative stage): step 2/3. Its function is as follows. Hydrolysis of 6-phosphogluconolactone to 6-phosphogluconate. The chain is 6-phosphogluconolactonase (pgl) from Borreliella burgdorferi (strain ATCC 35210 / DSM 4680 / CIP 102532 / B31) (Borrelia burgdorferi).